Here is a 1040-residue protein sequence, read N- to C-terminus: Contactin-2 (1040 aa).

Positions 1 to 30 (MGTATRRKPHLLLVAAVALVSSSAWSSALG) are cleaved as a signal peptide. Ig-like C2-type domains follow at residues 43–128 (PLSV…AILR), 133–222 (QEFS…SVFS), 239–322 (PSIK…GRII), 327–411 (PEWL…AELA), 417–504 (PDFR…GILS), and 509–603 (TKIT…ATVL). Intrachain disulfides connect Cys61-Cys111, Cys155-Cys207, Cys261-Cys306, and Cys348-Cys395. N-linked (GlcNAc...) asparagine glycosylation is found at Asn76, Asn198, and Asn204. N-linked (GlcNAc...) asparagine glycans are attached at residues Asn461, Asn477, Asn498, and Asn525. 4 Fibronectin type-III domains span residues 610 to 708 (PPGG…TREA), 713 to 810 (APSG…SAEE), 815 to 910 (APTK…TMKP), and 915 to 1006 (PPGN…NGGT). Residues 694–720 (GEPSGPSSKIRTREAAPSVAPSGLSGG) form a disordered region. A Cell attachment site motif is present at residues 794–796 (RGD). Asn830, Asn904, Asn918, and Asn940 each carry an N-linked (GlcNAc...) asparagine glycan. A disordered region spans residues 894–919 (AGTGPASPSANATTMKPPPRRPPGNI). Asn1012 carries the GPI-anchor amidated asparagine lipid modification. Residues 1013–1040 (MAVRPAPHPGTVISHSVAMLILIGSLEL) constitute a propeptide, removed in mature form.

This sequence belongs to the immunoglobulin superfamily. Contactin family.

The protein resides in the cell membrane. In conjunction with another transmembrane protein, CNTNAP2, contributes to the organization of axonal domains at nodes of Ranvier by maintaining voltage-gated potassium channels at the juxtaparanodal region. May be involved in cell adhesion. This chain is Contactin-2 (CNTN2), found in Homo sapiens (Human).